We begin with the raw amino-acid sequence, 179 residues long: Probable mitochondrial import inner membrane translocase subunit Tim17 1 (179 aa).

3 helical membrane passes run 17 to 37 (CGGA…IKGF), 61 to 81 (LVGG…CSLV), and 113 to 133 (LSSA…GIVV).

It belongs to the Tim17/Tim22/Tim23 family. As to quaternary structure, component of the TIM23 complex at least composed of Tim23, Tim17 (Tim17a1, Tim17a2 or Tim17b1) and a Tim50. The complex interacts with the Tim44 component of the PAM complex.

Its subcellular location is the mitochondrion inner membrane. Functionally, essential component of the TIM23 complex, a complex that mediates the translocation of transit peptide-containing proteins across the mitochondrial inner membrane. This chain is Probable mitochondrial import inner membrane translocase subunit Tim17 1 (Tim17b1), found in Drosophila melanogaster (Fruit fly).